The following is a 372-amino-acid chain: Pepsin A (372 aa).

Positions Met-1–Glu-42 are cleaved as a propeptide — activation peptide. The region spanning Tyr-60–Ala-369 is the Peptidase A1 domain. Asp-78 is a catalytic residue. Cysteines 91 and 96 form a disulfide. Phosphoserine is present on Ser-114. Cysteines 252 and 256 form a disulfide. The active site involves Asp-261. An intrachain disulfide couples Cys-295 to Cys-328.

This sequence belongs to the peptidase A1 family.

The protein resides in the secreted. It catalyses the reaction Preferential cleavage: hydrophobic, preferably aromatic, residues in P1 and P1' positions. Cleaves 1-Phe-|-Val-2, 4-Gln-|-His-5, 13-Glu-|-Ala-14, 14-Ala-|-Leu-15, 15-Leu-|-Tyr-16, 16-Tyr-|-Leu-17, 23-Gly-|-Phe-24, 24-Phe-|-Phe-25 and 25-Phe-|-Tyr-26 bonds in the B chain of insulin.. Its function is as follows. Shows particularly broad specificity; although bonds involving phenylalanine and leucine are preferred, many others are also cleaved to some extent. The protein is Pepsin A (PGA) of Bos taurus (Bovine).